We begin with the raw amino-acid sequence, 301 residues long: Nucleosome assembly protein 1;3 (301 aa).

Residues Val15 to Glu69 adopt a coiled-coil conformation. The Nuclear export signal signature appears at Leu36 to Gln51. Positions Asp278–Ala301 are disordered.

The protein belongs to the nucleosome assembly protein (NAP) family.

It is found in the nucleus. The protein localises to the cytoplasm. Functionally, may modulate chromatin structure by regulation of nucleosome assembly/disassembly. The polypeptide is Nucleosome assembly protein 1;3 (NAP1;3) (Oryza sativa subsp. japonica (Rice)).